Here is a 29-residue protein sequence, read N- to C-terminus: Cytochrome b6-f complex subunit 8 (29 aa).

The helical transmembrane segment at 3–23 (ILSISWAFLMVVFTFSLSLVV) threads the bilayer.

It belongs to the PetN family. As to quaternary structure, the 4 large subunits of the cytochrome b6-f complex are cytochrome b6, subunit IV (17 kDa polypeptide, PetD), cytochrome f and the Rieske protein, while the 4 small subunits are PetG, PetL, PetM and PetN. The complex functions as a dimer.

The protein resides in the plastid. It is found in the chloroplast thylakoid membrane. Component of the cytochrome b6-f complex, which mediates electron transfer between photosystem II (PSII) and photosystem I (PSI), cyclic electron flow around PSI, and state transitions. This is Cytochrome b6-f complex subunit 8 from Chara vulgaris (Common stonewort).